Here is a 296-residue protein sequence, read N- to C-terminus: tRNA dimethylallyltransferase (296 aa).

Residue 10–17 coordinates ATP; sequence GPTASGKT. Position 12–17 (12–17) interacts with substrate; that stretch reads TASGKT. The segment at 35-38 is interaction with substrate tRNA; it reads DSRQ.

Belongs to the IPP transferase family. In terms of assembly, monomer. The cofactor is Mg(2+).

The enzyme catalyses adenosine(37) in tRNA + dimethylallyl diphosphate = N(6)-dimethylallyladenosine(37) in tRNA + diphosphate. Functionally, catalyzes the transfer of a dimethylallyl group onto the adenine at position 37 in tRNAs that read codons beginning with uridine, leading to the formation of N6-(dimethylallyl)adenosine (i(6)A). This chain is tRNA dimethylallyltransferase, found in Synechococcus sp. (strain RCC307).